The sequence spans 129 residues: Transcription antitermination protein NusB (129 aa).

This sequence belongs to the NusB family.

Its function is as follows. Involved in transcription antitermination. Required for transcription of ribosomal RNA (rRNA) genes. Binds specifically to the boxA antiterminator sequence of the ribosomal RNA (rrn) operons. This is Transcription antitermination protein NusB from Staphylococcus epidermidis (strain ATCC 35984 / DSM 28319 / BCRC 17069 / CCUG 31568 / BM 3577 / RP62A).